Consider the following 209-residue polypeptide: Yop proteins translocation protein K (209 aa).

Its function is as follows. Belongs to an operon involved in the translocation of Yop proteins across the bacterial membranes or in the specific control of this function. This chain is Yop proteins translocation protein K (yscK), found in Yersinia enterocolitica.